A 360-amino-acid polypeptide reads, in one-letter code: UDP-N-acetylglucosamine--N-acetylmuramyl-(pentapeptide) pyrophosphoryl-undecaprenol N-acetylglucosamine transferase (360 aa).

UDP-N-acetyl-alpha-D-glucosamine-binding residues include serine 198 and glutamine 289.

The protein belongs to the glycosyltransferase 28 family. MurG subfamily.

The protein resides in the cell membrane. It catalyses the reaction Mur2Ac(oyl-L-Ala-gamma-D-Glu-L-Lys-D-Ala-D-Ala)-di-trans,octa-cis-undecaprenyl diphosphate + UDP-N-acetyl-alpha-D-glucosamine = beta-D-GlcNAc-(1-&gt;4)-Mur2Ac(oyl-L-Ala-gamma-D-Glu-L-Lys-D-Ala-D-Ala)-di-trans,octa-cis-undecaprenyl diphosphate + UDP + H(+). It participates in cell wall biogenesis; peptidoglycan biosynthesis. Functionally, cell wall formation. Catalyzes the transfer of a GlcNAc subunit on undecaprenyl-pyrophosphoryl-MurNAc-pentapeptide (lipid intermediate I) to form undecaprenyl-pyrophosphoryl-MurNAc-(pentapeptide)GlcNAc (lipid intermediate II). The polypeptide is UDP-N-acetylglucosamine--N-acetylmuramyl-(pentapeptide) pyrophosphoryl-undecaprenol N-acetylglucosamine transferase (Streptococcus pyogenes serotype M18 (strain MGAS8232)).